We begin with the raw amino-acid sequence, 320 residues long: Cilia- and flagella-associated protein 77 (320 aa).

Positions 1 to 27 (MPEARSSGPDLTRWRKQQQPVRRTVSQ) are disordered. Residues 17–27 (QQQPVRRTVSQ) are compositionally biased toward polar residues.

It belongs to the CFAP77 family. Microtubule inner protein component of sperm flagellar doublet microtubules. In terms of tissue distribution, expressed in airway epithelial cells.

It localises to the cytoplasm. It is found in the cytoskeleton. The protein resides in the cilium axoneme. The protein localises to the flagellum axoneme. In terms of biological role, microtubule inner protein (MIP) part of the dynein-decorated doublet microtubules (DMTs) in cilia axoneme, which is required for motile cilia beating. The chain is Cilia- and flagella-associated protein 77 from Homo sapiens (Human).